A 65-amino-acid polypeptide reads, in one-letter code: Large ribosomal subunit protein bL35 (65 aa).

It belongs to the bacterial ribosomal protein bL35 family.

This chain is Large ribosomal subunit protein bL35, found in Aromatoleum aromaticum (strain DSM 19018 / LMG 30748 / EbN1) (Azoarcus sp. (strain EbN1)).